The sequence spans 455 residues: Ribulose bisphosphate carboxylase large chain (455 aa).

At K5 the chain carries N6,N6,N6-trimethyllysine. Residues N114 and T164 each contribute to the substrate site. Catalysis depends on K166, which acts as the Proton acceptor. K168 provides a ligand contact to substrate. 3 residues coordinate Mg(2+): K192, D194, and E195. Position 192 is an N6-carboxylysine (K192). H285 acts as the Proton acceptor in catalysis. Positions 286, 318, and 370 each coordinate substrate.

This sequence belongs to the RuBisCO large chain family. Type I subfamily. Heterohexadecamer of 8 large chains and 8 small chains; disulfide-linked. The disulfide link is formed within the large subunit homodimers. The cofactor is Mg(2+). Post-translationally, the disulfide bond which can form in the large chain dimeric partners within the hexadecamer appears to be associated with oxidative stress and protein turnover.

The protein resides in the plastid. Its subcellular location is the chloroplast. The enzyme catalyses 2 (2R)-3-phosphoglycerate + 2 H(+) = D-ribulose 1,5-bisphosphate + CO2 + H2O. It catalyses the reaction D-ribulose 1,5-bisphosphate + O2 = 2-phosphoglycolate + (2R)-3-phosphoglycerate + 2 H(+). Functionally, ruBisCO catalyzes two reactions: the carboxylation of D-ribulose 1,5-bisphosphate, the primary event in carbon dioxide fixation, as well as the oxidative fragmentation of the pentose substrate in the photorespiration process. Both reactions occur simultaneously and in competition at the same active site. This chain is Ribulose bisphosphate carboxylase large chain, found in Lupinus luteus (European yellow lupine).